The chain runs to 492 residues: Ammonium transporter MEP1 (492 aa).

At 1-18 (MESRTTGPLTTETYDGPT) the chain is on the extracellular side. The helical transmembrane segment at 19–39 (VAFMILGAALVFFMVPGLGFL) threads the bilayer. The Cytoplasmic segment spans residues 40–49 (YSGLARRKSA). The helical transmembrane segment at 50–70 (LALIWVVLMATLVGILQWYFW) threads the bilayer. Over 71 to 109 (GYSLAFSKSAPNNKFIGNLDSFGFRNVYGKKFDEDAYPE) the chain is Extracellular. Residues 110 to 130 (LAYATFQMMFSCVNLSIIAGA) traverse the membrane as a helical segment. Residues 131-140 (TAERGRLLPH) lie on the Cytoplasmic side of the membrane. The helical transmembrane segment at 141-161 (MVFLFILATIGYCPVTYWIWS) threads the bilayer. Over 162–174 (PGGWAYQWGVLDW) the chain is Extracellular. A helical membrane pass occupies residues 175–195 (AGGGNIEILSAVSGFVYSWFL). Topologically, residues 196–210 (GKRNEKLLINFRPHN) are cytoplasmic. A helical membrane pass occupies residues 211–231 (VSLVTLGTSILWFGWLLFNSA). Over 232–240 (SSLSPNLRS) the chain is Extracellular. The helical transmembrane segment at 241–261 (VYAFMNTCLSAITGGMTWCLL) threads the bilayer. The Cytoplasmic segment spans residues 262-268 (DYRSEKK). A helical transmembrane segment spans residues 269–289 (WSTVGLCSGIISGLVAATPSS). Gly-290 is a topological domain (extracellular). The helical transmembrane segment at 291–311 (CITLYGSLIQGIVAGVVCNFA) threads the bilayer. The Cytoplasmic segment spans residues 312-331 (TKLKYYAKVDDAMDILAEHG). A helical transmembrane segment spans residues 332–352 (VAGVIGLIFNALFGADWVIGM). Over 353–373 (DGTTEHEGGWVTHNYKQMYKQ) the chain is Extracellular. The chain crosses the membrane as a helical span at residues 374 to 394 (IAYIAASIGYTAAVTAIICFV). Over 395–492 (LGYIPGMRLR…PIHQEDPANR (98 aa)) the chain is Cytoplasmic. Ser-442 and Ser-445 each carry phosphoserine. Positions 455–492 (HLAAERSSSGTNSSSDGNGEMIQSEKILPIHQEDPANR) are disordered. Positions 461 to 473 (SSSGTNSSSDGNG) are enriched in low complexity.

This sequence belongs to the ammonia transporter channel (TC 1.A.11.2) family.

It is found in the membrane. Functionally, transporter for ammonium (both charged and uncharged NH3 and NH4) to use as a nitrogen source. Can also transport methylamine. The affinity of MEP1 is about twenty times lower than that of MEP2. MEP3 has the lowest affinity. The sequence is that of Ammonium transporter MEP1 (MEP1) from Saccharomyces cerevisiae (strain ATCC 204508 / S288c) (Baker's yeast).